Here is a 141-residue protein sequence, read N- to C-terminus: Galactose-6-phosphate isomerase subunit LacA (141 aa).

The protein belongs to the LacAB/RpiB family. As to quaternary structure, heteromultimeric protein consisting of LacA and LacB.

The catalysed reaction is aldehydo-D-galactose 6-phosphate = keto-D-tagatose 6-phosphate. It participates in carbohydrate metabolism; D-galactose 6-phosphate degradation; D-tagatose 6-phosphate from D-galactose 6-phosphate: step 1/1. In Streptococcus pneumoniae (strain 70585), this protein is Galactose-6-phosphate isomerase subunit LacA.